The primary structure comprises 1114 residues: Translation initiation factor IF-2 (1114 aa).

Disordered stretches follow at residues 69 to 102 (SIKKDNFKQNKSPSISSKKETPLKDNSNKKPLLI) and 181 to 507 (INNN…KRRA). The segment covering 85 to 96 (SKKETPLKDNSN) has biased composition (basic and acidic residues). Over residues 181–198 (INNNVKSNESSQNISSAG) the composition is skewed to polar residues. The segment covering 240 to 251 (INPNKQNNKQNI) has biased composition (low complexity). Polar residues predominate over residues 252 to 261 (AFKQTGSNRI). Low complexity-rich tracts occupy residues 262-278 (GSPNRPGMPNNRPGLRN), 290-309 (NRQGNPNRPGMPNNRPGLRN), and 321-337 (NRQGNPNRPGMPNNRPG). Residues 365–375 (NSEKDNKDKNN) show a composition bias toward basic and acidic residues. The span at 376-385 (NAKQNINGPN) shows a compositional bias: low complexity. The segment covering 417–431 (GKTDWDDSAKLEALR) has biased composition (basic and acidic residues). The span at 489–505 (KQFKKKKKETTRQRQKR) shows a compositional bias: basic residues. Residues 606–778 (RRPPVITVMG…ILLVSEVEDL (173 aa)) enclose the tr-type G domain. A G1 region spans residues 615–622 (GHVDHGKT). 615–622 (GHVDHGKT) contacts GTP. Residues 640–644 (GITQH) form a G2 region. The G3 stretch occupies residues 665–668 (DTPG). Residues 665-669 (DTPGH) and 719-722 (NKID) contribute to the GTP site. The interval 719–722 (NKID) is G4. Residues 755–757 (SAI) form a G5 region.

The protein belongs to the TRAFAC class translation factor GTPase superfamily. Classic translation factor GTPase family. IF-2 subfamily.

Its subcellular location is the cytoplasm. Functionally, one of the essential components for the initiation of protein synthesis. Protects formylmethionyl-tRNA from spontaneous hydrolysis and promotes its binding to the 30S ribosomal subunits. Also involved in the hydrolysis of GTP during the formation of the 70S ribosomal complex. In Prochlorococcus marinus (strain MIT 9301), this protein is Translation initiation factor IF-2.